A 232-amino-acid chain; its full sequence is Large ribosomal subunit protein uL1 (232 aa).

This sequence belongs to the universal ribosomal protein uL1 family. Part of the 50S ribosomal subunit.

In terms of biological role, binds directly to 23S rRNA. The L1 stalk is quite mobile in the ribosome, and is involved in E site tRNA release. Functionally, protein L1 is also a translational repressor protein, it controls the translation of the L11 operon by binding to its mRNA. The sequence is that of Large ribosomal subunit protein uL1 from Bartonella henselae (strain ATCC 49882 / DSM 28221 / CCUG 30454 / Houston 1) (Rochalimaea henselae).